The following is a 565-amino-acid chain: Adenine deaminase 1 (565 aa).

Belongs to the metallo-dependent hydrolases superfamily. Adenine deaminase family. It depends on Mn(2+) as a cofactor.

It catalyses the reaction adenine + H2O + H(+) = hypoxanthine + NH4(+). The polypeptide is Adenine deaminase 1 (Rhizobium etli (strain ATCC 51251 / DSM 11541 / JCM 21823 / NBRC 15573 / CFN 42)).